A 420-amino-acid chain; its full sequence is Serine hydroxymethyltransferase (420 aa).

(6S)-5,6,7,8-tetrahydrofolate is bound by residues Leu-121 and 125–127 (GHL). Position 230 is an N6-(pyridoxal phosphate)lysine (Lys-230). 355–357 (SPF) serves as a coordination point for (6S)-5,6,7,8-tetrahydrofolate.

This sequence belongs to the SHMT family. As to quaternary structure, homodimer. Pyridoxal 5'-phosphate is required as a cofactor.

The protein localises to the cytoplasm. It catalyses the reaction (6R)-5,10-methylene-5,6,7,8-tetrahydrofolate + glycine + H2O = (6S)-5,6,7,8-tetrahydrofolate + L-serine. It participates in one-carbon metabolism; tetrahydrofolate interconversion. The protein operates within amino-acid biosynthesis; glycine biosynthesis; glycine from L-serine: step 1/1. Functionally, catalyzes the reversible interconversion of serine and glycine with tetrahydrofolate (THF) serving as the one-carbon carrier. This reaction serves as the major source of one-carbon groups required for the biosynthesis of purines, thymidylate, methionine, and other important biomolecules. Also exhibits THF-independent aldolase activity toward beta-hydroxyamino acids, producing glycine and aldehydes, via a retro-aldol mechanism. This is Serine hydroxymethyltransferase from Streptococcus mutans serotype c (strain ATCC 700610 / UA159).